Here is a 315-residue protein sequence, read N- to C-terminus: Adenine deaminase (315 aa).

Zn(2+) contacts are provided by His14, His16, and His194. Residue Glu197 is the Proton donor of the active site. Asp275 provides a ligand contact to Zn(2+). Asp276 provides a ligand contact to substrate.

It belongs to the metallo-dependent hydrolases superfamily. Adenosine and AMP deaminases family. Adenine deaminase type 2 subfamily. The cofactor is Zn(2+).

It carries out the reaction adenine + H2O + H(+) = hypoxanthine + NH4(+). In terms of biological role, catalyzes the hydrolytic deamination of adenine to hypoxanthine. Plays an important role in the purine salvage pathway and in nitrogen catabolism. The polypeptide is Adenine deaminase (Pseudomonas putida (strain GB-1)).